We begin with the raw amino-acid sequence, 340 residues long: Mitotic checkpoint protein BUB3.1 (340 aa).

A disordered region spans residues 1-20 (MTTVTPSAGRELSNPPSDGI). WD repeat units follow at residues 15–54 (PPSDGISNLRFSNNSDHLLVSSWDKRVRLYDVSTNSLKGE), 96–135 (THDKAVRCVEYSYAAGQVITGSWDKTVKCWDPRGASGPER), 142–179 (LQPERVYSMSLVGHRLVVATAGRHVNIYDLRNMSQPEQ), 239–278 (DIVYPVNSIAFHPIYGTFATGGCDGFVNIWDGNNKKRLYQ), and 281–324 (KYPT…RSVN).

The protein belongs to the WD repeat BUB3 family. As to quaternary structure, part of the mitotic checkpoint complex (MCC); interacts with CDC20-1 and CDC20-2. Interacts with MAD2 and BUBR1. As to expression, expressed in actively dividing tissues, early in organ development, in young leaves, lateral root primordia and root meristems, flower buds, flowers and siliques.

The protein resides in the nucleus. It localises to the chromosome. The protein localises to the centromere. Its subcellular location is the kinetochore. It is found in the cytoplasm. The protein resides in the cytoskeleton. It localises to the phragmoplast. The protein localises to the spindle. Its function is as follows. Has a dual function in spindle-assembly checkpoint signaling and in promoting the establishment of correct kinetochore-microtubule (K-MT) attachments. Promotes the formation of stable end-on bipolar attachments. Necessary for kinetochore localization of BUB1. The BUB1/BUB3 complex plays a role in the inhibition of anaphase-promoting complex or cyclosome (APC/C) when spindle-assembly checkpoint is activated and inhibits the ubiquitin ligase activity of APC/C by phosphorylating its activator CDC20. Essential for gametophyte development. The chain is Mitotic checkpoint protein BUB3.1 (BUB3.1) from Arabidopsis thaliana (Mouse-ear cress).